The following is a 637-amino-acid chain: Phosphomethylpyrimidine synthase (637 aa).

Residues N242, M271, Y300, H336, 356 to 358, 397 to 400, and E436 each bind substrate; these read SRG and DGLR. Residue H440 coordinates Zn(2+). Y463 contributes to the substrate binding site. H504 contacts Zn(2+). C584, C587, and C592 together coordinate [4Fe-4S] cluster.

The protein belongs to the ThiC family. Homodimer. Requires [4Fe-4S] cluster as cofactor.

The enzyme catalyses 5-amino-1-(5-phospho-beta-D-ribosyl)imidazole + S-adenosyl-L-methionine = 4-amino-2-methyl-5-(phosphooxymethyl)pyrimidine + CO + 5'-deoxyadenosine + formate + L-methionine + 3 H(+). The protein operates within cofactor biosynthesis; thiamine diphosphate biosynthesis. Its function is as follows. Catalyzes the synthesis of the hydroxymethylpyrimidine phosphate (HMP-P) moiety of thiamine from aminoimidazole ribotide (AIR) in a radical S-adenosyl-L-methionine (SAM)-dependent reaction. This chain is Phosphomethylpyrimidine synthase, found in Bordetella avium (strain 197N).